Here is a 1545-residue protein sequence, read N- to C-terminus: Pentafunctional AROM polypeptide (1545 aa).

Positions 1–383 (MSGLIEKVSI…YEPKASYVND (383 aa)) are 3-dehydroquinate synthase. NAD(+) is bound by residues 44–46 (DSN), 82–85 (EANK), 113–115 (GGV), and aspartate 118. Arginine 129 contributes to the 7-phospho-2-dehydro-3-deoxy-D-arabino-heptonate binding site. Position 138–139 (138–139 (TS)) interacts with NAD(+). Residues aspartate 145 and lysine 151 each contribute to the 7-phospho-2-dehydro-3-deoxy-D-arabino-heptonate site. NAD(+) is bound at residue lysine 160. Asparagine 161 is a 7-phospho-2-dehydro-3-deoxy-D-arabino-heptonate binding site. NAD(+) is bound by residues 178–181 (FLET) and asparagine 189. Glutamate 193 serves as a coordination point for Zn(2+). Residues 193–196 (EVVK) and lysine 249 contribute to the 7-phospho-2-dehydro-3-deoxy-D-arabino-heptonate site. Catalysis depends on glutamate 259, which acts as the Proton acceptor; for 3-dehydroquinate synthase activity. 7-phospho-2-dehydro-3-deoxy-D-arabino-heptonate contacts are provided by residues 263-267 (RNLLN) and histidine 270. Zn(2+) is bound at residue histidine 270. Histidine 274 acts as the Proton acceptor; for 3-dehydroquinate synthase activity in catalysis. 2 residues coordinate 7-phospho-2-dehydro-3-deoxy-D-arabino-heptonate: histidine 286 and lysine 355. Histidine 286 contacts Zn(2+). The EPSP synthase stretch occupies residues 396–840 (VKDFNSAPST…WDILHTTFNV (445 aa)). The active-site For EPSP synthase activity is the cysteine 822. A shikimate kinase region spans residues 859–1049 (DKSIIVIGMR…IPNGRSAFVC (191 aa)). Residue 866–873 (GMRAAGKS) participates in ATP binding. The 3-dehydroquinase stretch occupies residues 1050–1261 (LTYEDLAPVS…AAPGQLTLKE (212 aa)). The active-site Proton acceptor; for 3-dehydroquinate dehydratase activity is histidine 1166. Catalysis depends on lysine 1195, which acts as the Schiff-base intermediate with substrate; for 3-dehydroquinate dehydratase activity. The shikimate dehydrogenase stretch occupies residues 1274–1545 (RKKFYIVGKP…GYQFSSHIDL (272 aa)).

This sequence in the N-terminal section; belongs to the sugar phosphate cyclases superfamily. Dehydroquinate synthase family. The protein in the 2nd section; belongs to the EPSP synthase family. In the 3rd section; belongs to the shikimate kinase family. It in the 4th section; belongs to the type-I 3-dehydroquinase family. This sequence in the C-terminal section; belongs to the shikimate dehydrogenase family. In terms of assembly, homodimer. Zn(2+) is required as a cofactor.

It is found in the cytoplasm. The enzyme catalyses 7-phospho-2-dehydro-3-deoxy-D-arabino-heptonate = 3-dehydroquinate + phosphate. The catalysed reaction is 3-dehydroquinate = 3-dehydroshikimate + H2O. It catalyses the reaction shikimate + NADP(+) = 3-dehydroshikimate + NADPH + H(+). It carries out the reaction shikimate + ATP = 3-phosphoshikimate + ADP + H(+). The enzyme catalyses 3-phosphoshikimate + phosphoenolpyruvate = 5-O-(1-carboxyvinyl)-3-phosphoshikimate + phosphate. Its pathway is metabolic intermediate biosynthesis; chorismate biosynthesis; chorismate from D-erythrose 4-phosphate and phosphoenolpyruvate: step 2/7. It participates in metabolic intermediate biosynthesis; chorismate biosynthesis; chorismate from D-erythrose 4-phosphate and phosphoenolpyruvate: step 3/7. It functions in the pathway metabolic intermediate biosynthesis; chorismate biosynthesis; chorismate from D-erythrose 4-phosphate and phosphoenolpyruvate: step 4/7. The protein operates within metabolic intermediate biosynthesis; chorismate biosynthesis; chorismate from D-erythrose 4-phosphate and phosphoenolpyruvate: step 5/7. Its pathway is metabolic intermediate biosynthesis; chorismate biosynthesis; chorismate from D-erythrose 4-phosphate and phosphoenolpyruvate: step 6/7. Functionally, the AROM polypeptide catalyzes 5 consecutive enzymatic reactions in prechorismate polyaromatic amino acid biosynthesis. In Komagataella phaffii (strain GS115 / ATCC 20864) (Yeast), this protein is Pentafunctional AROM polypeptide.